An 86-amino-acid polypeptide reads, in one-letter code: Mu-theraphotoxin-Hhn1b 3 (86 aa).

An N-terminal signal peptide occupies residues 1–21 (MKASMFLALTGLALLFVVCYA). Residues 22-49 (SESEEKEFSNELLSSVLAVDDNSKGEER) constitute a propeptide that is removed on maturation. Cystine bridges form between Cys-51–Cys-66, Cys-58–Cys-73, and Cys-65–Cys-80. Ile-84 is modified (isoleucine amide).

This sequence belongs to the neurotoxin 10 (Hwtx-1) family. 22 (Htx-4) subfamily. As to quaternary structure, monomer. In terms of tissue distribution, expressed by the venom gland.

It is found in the secreted. Neurotoxin. Selectively blocks neuronal tetrodotoxin-sensitive voltage-gated sodium channels (Nav) with an IC(50) of 44.6 nM. Does not affect tetrodotoxin-resistant voltage-gated sodium channels or calcium channels. This chain is Mu-theraphotoxin-Hhn1b 3, found in Cyriopagopus hainanus (Chinese bird spider).